Reading from the N-terminus, the 248-residue chain is uncharacterized protein (248 aa).

8–32 (EVALVTGASSGIGKAIALELASAGL) contacts NADP(+). Residue serine 134 participates in substrate binding. Tyrosine 147 (proton acceptor) is an active-site residue.

Belongs to the short-chain dehydrogenases/reductases (SDR) family.

This is an uncharacterized protein from Sinorhizobium fredii (strain NBRC 101917 / NGR234).